The sequence spans 2046 residues: Protein TIC 214 (2046 aa).

The next 6 membrane-spanning stretches (helical) occupy residues 18–38, 54–74, 79–99, 125–145, 163–183, and 214–234; these read VSGPIILFGLYYGFIATLPFG, LYGIIAISGSITGQLIVFLSM, IYAALWKPHAITLLVIPYTFC, ILSLFMGGLILQLLNPILLAN, ISFMISSFCGWLGGHILFINL, and TFSVLLISYFSFYLGRSPLIF. Disordered regions lie at residues 278–299, 320–472, and 1833–1898; these read DEDRSVAMAKKGRSVAEDEDRS, ARSV…VPRE, and AKDS…EDEI. Basic and acidic residues-rich tracts occupy residues 322-335, 344-368, and 378-457; these read SVAEDKDPEDEHRS, SVAEDKDPEDEHRSVAMAKKDRSVA, and AKKD…RSVA. Positions 1833 to 1866 are enriched in low complexity; that stretch reads AKDSNANDINAKDSNANDINANDSNAKDSNANDI. Over residues 1882–1898 the composition is skewed to basic and acidic residues; the sequence is NAKDSNADVPKKKEDEI.

It belongs to the TIC214 family. In terms of assembly, part of the Tic complex.

The protein resides in the plastid. It is found in the chloroplast inner membrane. Functionally, involved in protein precursor import into chloroplasts. May be part of an intermediate translocation complex acting as a protein-conducting channel at the inner envelope. The sequence is that of Protein TIC 214 from Pinus koraiensis (Korean pine).